A 164-amino-acid chain; its full sequence is Phosphopantetheine adenylyltransferase (164 aa).

Thr9 lines the substrate pocket. ATP is bound by residues 9 to 10 and His17; that span reads TF. Positions 41, 76, and 90 each coordinate substrate. Residues 91-93, Glu101, and 126-132 each bind ATP; these read GLR and YQFVSSS.

It belongs to the bacterial CoaD family. Homohexamer. Mg(2+) is required as a cofactor.

The protein resides in the cytoplasm. It carries out the reaction (R)-4'-phosphopantetheine + ATP + H(+) = 3'-dephospho-CoA + diphosphate. The protein operates within cofactor biosynthesis; coenzyme A biosynthesis; CoA from (R)-pantothenate: step 4/5. Its function is as follows. Reversibly transfers an adenylyl group from ATP to 4'-phosphopantetheine, yielding dephospho-CoA (dPCoA) and pyrophosphate. In Coprothermobacter proteolyticus (strain ATCC 35245 / DSM 5265 / OCM 4 / BT), this protein is Phosphopantetheine adenylyltransferase.